The sequence spans 104 residues: Inclusion membrane protein F (104 aa).

A run of 2 helical transmembrane segments spans residues 39-59 and 70-90; these read LVVA…SLVA and LAVL…VLFI.

It localises to the secreted. It is found in the host vacuole. The protein localises to the host pathogen-containing vacuole. Its subcellular location is the host pathogen-containing vacuole membrane. Functionally, inclusion membrane protein probably involved in early modification events of the chlamydial inclusion. The chain is Inclusion membrane protein F from Chlamydia trachomatis serovar L2 (strain ATCC VR-902B / DSM 19102 / 434/Bu).